The chain runs to 623 residues: uncharacterized protein (623 aa).

A run of 5 helical transmembrane segments spans residues 242–262 (IALA…ITWL), 288–308 (IVSP…LDIF), 318–338 (VSMW…IALF), 361–381 (VINL…LLGV), and 387–407 (FNVS…ALAV).

Belongs to the MscS (TC 1.A.23) family.

Its subcellular location is the cell membrane. This is an uncharacterized protein from Helicobacter pylori (strain J99 / ATCC 700824) (Campylobacter pylori J99).